The sequence spans 181 residues: Protein CRABS CLAW (181 aa).

A C4-type zinc finger spans residues 26–53 (CSICNTILAVGIPLKRMLDTVTVKCGHC). Positions 80–122 (GSDYKKGSSSSSSSSTSSDQPPSPSPPFVVKPPEKKQRLPSAY) are disordered. Low complexity predominate over residues 87–99 (SSSSSSSSTSSDQ). Positions 100–109 (PPSPSPPFVV) are enriched in pro residues.

Belongs to the YABBY family. In terms of tissue distribution, restricted to flowers, mostly in carpels and nectaries. Expressed at low levels in sepal primordia (buds), sepal receptacle and developing petal. Not detected in placental tissues, septum, stigma and ovules.

It localises to the nucleus. Its function is as follows. Transcription factor required for the initiation of nectary development. Also involved in suppressing early radial growth of the gynoecium, in promoting its later elongation and in fusion of its carpels by regulating both cell division and expansion. Establishes the polar differentiation in the carpels by specifying abaxial cell fate in the ovary wall. Regulates both cell division and expansion. The sequence is that of Protein CRABS CLAW from Arabidopsis thaliana (Mouse-ear cress).